Here is a 146-residue protein sequence, read N- to C-terminus: Leghemoglobin Lb120-34 (146 aa).

One can recognise a Globin domain in the interval 2–146; the sequence is GFTEKQEALV…LASAIKKAMN (145 aa). Nitrated tyrosine is present on residues Tyr24 and Tyr29. A heme b-binding site is contributed by Ser44. Ser44 is subject to Phosphoserine. Residue His61 participates in O2 binding. Lys64, His93, and Lys96 together coordinate heme b. At Tyr134 the chain carries Nitrated tyrosine.

Belongs to the plant globin family. As to quaternary structure, monomer. Nitrated in effective nodules and particularly in hypoxic conditions; this mechanism may play a protective role in the symbiosis by buffering toxic peroxynitrite NO(2)(-). Nitration level decrease during nodule senescence. Post-translationally, phosphorylation at Ser-44 disrupts the molecular environment of its porphyrin ring oxygen binding pocket, thus leading to a reduced oxygen consumption and to the delivery of oxygen O(2) to symbiosomes. As to expression, root nodules.

The protein resides in the cytoplasm. Its subcellular location is the cytosol. It localises to the nucleus. Functionally, leghemoglobin that reversibly binds oxygen O(2) through a pentacoordinated heme iron. In root nodules, facilitates the diffusion of oxygen to the bacteroids while preventing the bacterial nitrogenase from being inactivated by buffering dioxygen, nitric oxide and carbon monoxide, and promoting the formation of reactive oxygen species (ROS, e.g. H(2)O(2)). This role is essential for symbiotic nitrogen fixation (SNF). The chain is Leghemoglobin Lb120-34 from Pisum sativum (Garden pea).